A 126-amino-acid polypeptide reads, in one-letter code: Methylglyoxal synthase (126 aa).

Residues 1–126 (MAGGKCIALI…AERLIKTLNH (126 aa)) form the MGS-like domain. Residues H12, K16, 38 to 41 (TGTT), and 59 to 60 (SG) contribute to the substrate site. The active-site Proton donor/acceptor is D65. H92 contacts substrate.

This sequence belongs to the methylglyoxal synthase family.

The catalysed reaction is dihydroxyacetone phosphate = methylglyoxal + phosphate. Catalyzes the formation of methylglyoxal from dihydroxyacetone phosphate. This is Methylglyoxal synthase from Rhizobium rhizogenes (strain K84 / ATCC BAA-868) (Agrobacterium radiobacter).